The sequence spans 56 residues: Large ribosomal subunit protein bL32 (56 aa).

It belongs to the bacterial ribosomal protein bL32 family.

The protein is Large ribosomal subunit protein bL32 of Prochlorococcus marinus (strain MIT 9301).